The primary structure comprises 485 residues: Sodium-coupled neutral amino acid symporter 1 (485 aa).

The Cytoplasmic segment spans residues methionine 1–glycine 74. Serine 6 bears the Phosphoserine mark. Threonine 11 is subject to Phosphothreonine. 4 positions are modified to phosphoserine: serine 25, serine 28, serine 49, and serine 52. The residue at position 54 (threonine 54) is a Phosphothreonine. Serine 56 carries the post-translational modification Phosphoserine. Residues methionine 75 to alanine 97 traverse the membrane as a helical segment. Residues asparagine 98 to threonine 112 lie on the Extracellular side of the membrane. Residues leucine 113–valine 133 form a helical membrane-spanning segment. At tyrosine 134–leucine 148 the chain is on the cytoplasmic side. A helical membrane pass occupies residues valine 149–valine 169. Residues lysine 170–serine 188 lie on the Extracellular side of the membrane. Residues alanine 189–leucine 211 form a helical membrane-spanning segment. At leucine 212–glycine 216 the chain is on the cytoplasmic side. The chain crosses the membrane as a helical span at residues tyrosine 217–isoleucine 237. Over tyrosine 238–threonine 273 the chain is Extracellular. The cysteines at positions 245 and 262 are disulfide-linked. 2 N-linked (GlcNAc...) asparagine glycosylation sites follow: asparagine 251 and asparagine 257. The helical transmembrane segment at valine 274–tyrosine 294 threads the bilayer. Residues serine 295–asparagine 310 are Cytoplasmic-facing. The chain crosses the membrane as a helical span at residues isoleucine 311–phenylalanine 331. Residues tyrosine 332–aspartate 348 lie on the Extracellular side of the membrane. Residues isoleucine 349–leucine 369 form a helical membrane-spanning segment. At phenylalanine 370–histidine 391 the chain is on the cytoplasmic side. A helical transmembrane segment spans residues valine 392 to methionine 412. Topologically, residues lysine 413–aspartate 414 are extracellular. The chain crosses the membrane as a helical span at residues isoleucine 415–leucine 435. The Cytoplasmic portion of the chain corresponds to tyrosine 436–arginine 450. The chain crosses the membrane as a helical span at residues isoleucine 451–valine 471. At isoleucine 472 to histidine 485 the chain is on the extracellular side.

It belongs to the amino acid/polyamine transporter 2 family. In terms of processing, N-glycosylation plays an important role in the L-glutamine transport. Specifically expressed in brain with the highest levels in cerebellum and thalamus (at protein level). Expressed in glutamatergic, GABAergic and a subset of dopaminergic neurons of the substantia nigra and cholinergic motoneurons (at protein level). Also expressed by ependymal cells lining the ventricle (at protein level). Expression is also detected in spinal cord, heart, colon and placenta.

The protein resides in the cell membrane. The catalysed reaction is L-glutamine(in) + Na(+)(in) = L-glutamine(out) + Na(+)(out). It catalyses the reaction L-alanine(in) + Na(+)(in) = L-alanine(out) + Na(+)(out). The enzyme catalyses L-asparagine(in) + Na(+)(in) = L-asparagine(out) + Na(+)(out). It carries out the reaction L-histidine(in) + Na(+)(in) = L-histidine(out) + Na(+)(out). The catalysed reaction is L-serine(in) + Na(+)(in) = L-serine(out) + Na(+)(out). It catalyses the reaction L-cysteine(in) + Na(+)(in) = L-cysteine(out) + Na(+)(out). The enzyme catalyses L-methionine(in) + Na(+)(in) = L-methionine(out) + Na(+)(out). It carries out the reaction glycine(in) + Na(+)(in) = glycine(out) + Na(+)(out). The catalysed reaction is L-threonine(in) + Na(+)(in) = L-threonine(out) + Na(+)(out). It catalyses the reaction L-proline(in) + Na(+)(in) = L-proline(out) + Na(+)(out). Inhibited by alpha-(methylamino)isobutyric acid (MeAIB). Inhibited by lithium, potassium, choline ions, N-methylglucamine. The pH dependence has an allosteric effect on the transport. Symporter that cotransports short-chain neutral amino acids and sodium ions from the extraccellular to the intracellular side of the cell membrane. The transport is elctrogenic, pH dependent and driven by the Na(+) electrochemical gradient. Participates in the astroglia-derived glutamine transport into GABAergic interneurons for neurotransmitter GABA de novo synthesis. May also contributes to amino acid transport in placental trophoblast. Regulates synaptic plasticity. The sequence is that of Sodium-coupled neutral amino acid symporter 1 from Rattus norvegicus (Rat).